The sequence spans 330 residues: Glycerol-3-phosphate dehydrogenase [NAD(P)+] (330 aa).

Residues serine 10, tryptophan 11, arginine 31, and lysine 105 each contribute to the NADPH site. The sn-glycerol 3-phosphate site is built by lysine 105, glycine 135, and serine 137. An NADPH-binding site is contributed by alanine 139. Positions 190, 243, 253, 254, and 255 each coordinate sn-glycerol 3-phosphate. Lysine 190 functions as the Proton acceptor in the catalytic mechanism. Arginine 254 contacts NADPH. Positions 278 and 280 each coordinate NADPH.

The protein belongs to the NAD-dependent glycerol-3-phosphate dehydrogenase family.

The protein localises to the cytoplasm. The catalysed reaction is sn-glycerol 3-phosphate + NAD(+) = dihydroxyacetone phosphate + NADH + H(+). It catalyses the reaction sn-glycerol 3-phosphate + NADP(+) = dihydroxyacetone phosphate + NADPH + H(+). It participates in membrane lipid metabolism; glycerophospholipid metabolism. In terms of biological role, catalyzes the reduction of the glycolytic intermediate dihydroxyacetone phosphate (DHAP) to sn-glycerol 3-phosphate (G3P), the key precursor for phospholipid synthesis. In Solidesulfovibrio magneticus (strain ATCC 700980 / DSM 13731 / RS-1) (Desulfovibrio magneticus), this protein is Glycerol-3-phosphate dehydrogenase [NAD(P)+].